The chain runs to 89 residues: Small ribosomal subunit protein uS15 (89 aa).

The protein belongs to the universal ribosomal protein uS15 family. As to quaternary structure, part of the 30S ribosomal subunit. Forms a bridge to the 50S subunit in the 70S ribosome, contacting the 23S rRNA.

Functionally, one of the primary rRNA binding proteins, it binds directly to 16S rRNA where it helps nucleate assembly of the platform of the 30S subunit by binding and bridging several RNA helices of the 16S rRNA. Forms an intersubunit bridge (bridge B4) with the 23S rRNA of the 50S subunit in the ribosome. This chain is Small ribosomal subunit protein uS15, found in Rhizobium leguminosarum bv. trifolii (strain WSM2304).